A 475-amino-acid polypeptide reads, in one-letter code: Ribulose bisphosphate carboxylase large chain (475 aa).

Residues 1-2 constitute a propeptide that is removed on maturation; sequence MS. N-acetylproline is present on Pro3. Lys14 carries the N6,N6,N6-trimethyllysine modification. Substrate contacts are provided by Asn123 and Thr173. The active-site Proton acceptor is the Lys175. A substrate-binding site is contributed by Lys177. The Mg(2+) site is built by Lys201, Asp203, and Glu204. Residue Lys201 is modified to N6-carboxylysine. The Proton acceptor role is filled by His294. Residues Arg295, His327, and Ser379 each coordinate substrate.

The protein belongs to the RuBisCO large chain family. Type I subfamily. Heterohexadecamer of 8 large chains and 8 small chains; disulfide-linked. The disulfide link is formed within the large subunit homodimers. Requires Mg(2+) as cofactor. Post-translationally, the disulfide bond which can form in the large chain dimeric partners within the hexadecamer appears to be associated with oxidative stress and protein turnover.

The protein resides in the plastid. The protein localises to the chloroplast. The catalysed reaction is 2 (2R)-3-phosphoglycerate + 2 H(+) = D-ribulose 1,5-bisphosphate + CO2 + H2O. It carries out the reaction D-ribulose 1,5-bisphosphate + O2 = 2-phosphoglycolate + (2R)-3-phosphoglycerate + 2 H(+). Functionally, ruBisCO catalyzes two reactions: the carboxylation of D-ribulose 1,5-bisphosphate, the primary event in carbon dioxide fixation, as well as the oxidative fragmentation of the pentose substrate in the photorespiration process. Both reactions occur simultaneously and in competition at the same active site. The sequence is that of Ribulose bisphosphate carboxylase large chain from Fagopyrum esculentum subsp. ancestrale (Wild buckwheat).